Consider the following 224-residue polypeptide: Glutathione S-transferase Mu 5 (224 aa).

Residues 4–91 (KSMVLGYWDI…YIARKHNMCG (88 aa)) form the GST N-terminal domain. At S5 the chain carries Phosphoserine. Residues 10-11 (YW), 49-53 (WLDVK), 62-63 (NL), and 75-76 (QS) each bind glutathione. In terms of domain architecture, GST C-terminal spans 93 to 211 (TEEEKIRVDI…QSDRFFKMPI (119 aa)). Y119 is a substrate binding site.

Belongs to the GST superfamily. Mu family. Homodimer. Interacts with PFKM isoform 2 and isoform 3 (via N-terminal testis-specific region).

The protein localises to the cytoplasm. It catalyses the reaction RX + glutathione = an S-substituted glutathione + a halide anion + H(+). In terms of biological role, conjugation of reduced glutathione to a wide number of exogenous and endogenous hydrophobic electrophiles. This chain is Glutathione S-transferase Mu 5 (Gstm5), found in Mus musculus (Mouse).